The chain runs to 411 residues: LL-diaminopimelate aminotransferase (411 aa).

Substrate-binding residues include tyrosine 15 and glycine 42. Pyridoxal 5'-phosphate contacts are provided by residues tyrosine 72, 108–109 (SK), tyrosine 132, asparagine 187, tyrosine 218, and 246–248 (SFS). The substrate site is built by lysine 109, tyrosine 132, and asparagine 187. Lysine 249 carries the post-translational modification N6-(pyridoxal phosphate)lysine. Pyridoxal 5'-phosphate-binding residues include arginine 257 and asparagine 292. Substrate-binding residues include asparagine 292 and arginine 388.

It belongs to the class-I pyridoxal-phosphate-dependent aminotransferase family. LL-diaminopimelate aminotransferase subfamily. In terms of assembly, homodimer. The cofactor is pyridoxal 5'-phosphate.

It carries out the reaction (2S,6S)-2,6-diaminopimelate + 2-oxoglutarate = (S)-2,3,4,5-tetrahydrodipicolinate + L-glutamate + H2O + H(+). It participates in amino-acid biosynthesis; L-lysine biosynthesis via DAP pathway; LL-2,6-diaminopimelate from (S)-tetrahydrodipicolinate (aminotransferase route): step 1/1. Its function is as follows. Involved in the synthesis of meso-diaminopimelate (m-DAP or DL-DAP), required for both lysine and peptidoglycan biosynthesis. Catalyzes the direct conversion of tetrahydrodipicolinate to LL-diaminopimelate. The sequence is that of LL-diaminopimelate aminotransferase from Citrifermentans bemidjiense (strain ATCC BAA-1014 / DSM 16622 / JCM 12645 / Bem) (Geobacter bemidjiensis).